A 152-amino-acid chain; its full sequence is Superoxide dismutase [Cu-Zn] 2 (152 aa).

Cu cation is bound by residues histidine 45, histidine 47, and histidine 62. Residues 53 to 81 form a disordered region; that stretch reads TNGSMSTGPHFNPDGKQHGAPEDANRHAG. Zn(2+) contacts are provided by histidine 62, histidine 70, histidine 79, and aspartate 82. Basic and acidic residues predominate over residues 65 to 81; it reads PDGKQHGAPEDANRHAG. Histidine 119 contributes to the Cu cation binding site.

The protein belongs to the Cu-Zn superoxide dismutase family. Homodimer. Requires Cu cation as cofactor. Zn(2+) serves as cofactor.

Its subcellular location is the cytoplasm. It carries out the reaction 2 superoxide + 2 H(+) = H2O2 + O2. Destroys radicals which are normally produced within the cells and which are toxic to biological systems. This chain is Superoxide dismutase [Cu-Zn] 2 (SODCC2), found in Brassica juncea (Indian mustard).